Here is a 175-residue protein sequence, read N- to C-terminus: Gamma-crystallin B (175 aa).

Beta/gamma crystallin 'Greek key' domains are found at residues glycine 2–serine 40 and glycine 41–proline 83. A connecting peptide region spans residues glutamine 84–threonine 88. Beta/gamma crystallin 'Greek key' domains follow at residues tyrosine 89–glutamate 129 and glycine 130–methionine 172.

It belongs to the beta/gamma-crystallin family.

Crystallins are the dominant structural components of the vertebrate eye lens. The chain is Gamma-crystallin B (Crygb) from Rattus norvegicus (Rat).